We begin with the raw amino-acid sequence, 628 residues long: Patulin synthase (628 aa).

A signal peptide spans 1 to 19 (MRLTSGIFHAAIAVAAVGA). Residue Asn49 is glycosylated (N-linked (GlcNAc...) asparagine). Residues 61 to 62 (TA) and 82 to 83 (EA) contribute to the FAD site. Asn93 is a glycosylation site (N-linked (GlcNAc...) asparagine). 148-151 (NYMA) is a binding site for FAD. Residues Asn198, Asn261, Asn283, Asn429, Asn486, and Asn526 are each glycosylated (N-linked (GlcNAc...) asparagine). His564 (proton acceptor) is an active-site residue. A glycan (N-linked (GlcNAc...) asparagine) is linked at Asn575. Residues Ala598 and 609-610 (PQ) each bind FAD.

This sequence belongs to the GMC oxidoreductase family. FAD is required as a cofactor.

Its subcellular location is the cytoplasm. The protein resides in the cell cortex. It is found in the vacuole. The protein localises to the secreted. It localises to the cell wall. It carries out the reaction (E)-ascladiol + A = patulin + AH2. The protein operates within mycotoxin biosynthesis; patulin biosynthesis. Patulin synthase; part of the gene cluster that mediates the biosynthesis of patulin, an acetate-derived tetraketide mycotoxin produced by several fungal species that shows antimicrobial properties against several bacteria. PatE catalyzes the last step of the pathway which is the conversion of E-ascladiol to patulin. The pathway begins with the synthesis of 6-methylsalicylic acid by the polyketide synthase (PKS) patK via condensation of acetate and malonate units. The 6-methylsalicylic acid decarboxylase patG then catalyzes the decarboxylation of 6-methylsalicylic acid to yield m-cresol (also known as 3-methylphenol). These first reactions occur in the cytosol. The intermediate m-cresol is then transported into the endoplasmic reticulum where the cytochrome P450 monooxygenase patH converts it to m-hydroxybenzyl alcohol, which is further converted to gentisyl alcohol by the cytochrome P450 monooxygenase patI. The oxidoreductases patJ and patO further convert gentisyl alcohol to isoepoxydon in the vacuole. PatN catalyzes then the transformation of isoepoxydon into phyllostine. The cluster protein patF is responsible for the conversion from phyllostine to neopatulin whereas the alcohol dehydrogenase patD converts neopatulin to E-ascladiol. The steps between isoepoxydon and E-ascladiol occur in the cytosol, and E-ascladiol is probably secreted to the extracellular space by one of the cluster-specific transporters patC or patM. Finally, the secreted patulin synthase patE catalyzes the conversion of E-ascladiol to patulin. The chain is Patulin synthase from Penicillium expansum (Blue mold rot fungus).